The sequence spans 380 residues: Cytochrome b (380 aa).

Helical transmembrane passes span 34-54 (FGSL…LLAM), 78-99 (WLIR…FLHI), 114-134 (WNTG…GYVL), and 179-199 (FFAL…IHLT). Positions 84 and 98 each coordinate heme b. The heme b site is built by H183 and H197. An a ubiquinone-binding site is contributed by H202. The next 4 membrane-spanning stretches (helical) occupy residues 227–247 (IKDI…ALFS), 289–309 (LGGV…PFLH), 321–341 (LSQT…WIGS), and 348–368 (FIII…ILFP).

The protein belongs to the cytochrome b family. As to quaternary structure, the cytochrome bc1 complex contains 11 subunits: 3 respiratory subunits (MT-CYB, CYC1 and UQCRFS1), 2 core proteins (UQCRC1 and UQCRC2) and 6 low-molecular weight proteins (UQCRH/QCR6, UQCRB/QCR7, UQCRQ/QCR8, UQCR10/QCR9, UQCR11/QCR10 and a cleavage product of UQCRFS1). This cytochrome bc1 complex then forms a dimer. Requires heme b as cofactor.

The protein resides in the mitochondrion inner membrane. In terms of biological role, component of the ubiquinol-cytochrome c reductase complex (complex III or cytochrome b-c1 complex) that is part of the mitochondrial respiratory chain. The b-c1 complex mediates electron transfer from ubiquinol to cytochrome c. Contributes to the generation of a proton gradient across the mitochondrial membrane that is then used for ATP synthesis. The polypeptide is Cytochrome b (MT-CYB) (Coturnix japonica (Japanese quail)).